The chain runs to 268 residues: Tryptophan synthase alpha chain (268 aa).

Residues glutamate 49 and aspartate 60 each act as proton acceptor in the active site.

It belongs to the TrpA family. Tetramer of two alpha and two beta chains.

The enzyme catalyses (1S,2R)-1-C-(indol-3-yl)glycerol 3-phosphate + L-serine = D-glyceraldehyde 3-phosphate + L-tryptophan + H2O. It functions in the pathway amino-acid biosynthesis; L-tryptophan biosynthesis; L-tryptophan from chorismate: step 5/5. Its function is as follows. The alpha subunit is responsible for the aldol cleavage of indoleglycerol phosphate to indole and glyceraldehyde 3-phosphate. The sequence is that of Tryptophan synthase alpha chain from Erwinia tasmaniensis (strain DSM 17950 / CFBP 7177 / CIP 109463 / NCPPB 4357 / Et1/99).